The chain runs to 202 residues: Protein phosphatase 1 regulatory subunit 1B (202 aa).

An N-acetylmethionine modification is found at Met1. The interval 1–202 is disordered; that stretch reads MDPKDRKKIQ…QRPAHPEPGT (202 aa). Phosphothreonine; by PKA is present on Thr34. A compositionally biased stretch (basic and acidic residues) spans 41–63; the sequence is LSEHSSPEEEASPHQRASGEGHH. Phosphoserine is present on residues Ser45 and Ser46. A Phosphothreonine; by CDK5 modification is found at Thr75. A compositionally biased stretch (polar residues) spans 89–100; sequence HLQSISNLGENQ. Ser102 is subject to Phosphoserine. The segment covering 109 to 118 has biased composition (basic and acidic residues); it reads GELRELGYPR. The segment covering 119–136 has biased composition (acidic residues); that stretch reads EEEEEEEEEDEEEEEDSQ. Ser135 carries the post-translational modification Phosphoserine. Residues 191–202 are compositionally biased toward basic and acidic residues; the sequence is EPQRPAHPEPGT.

Belongs to the protein phosphatase inhibitor 1 family. Post-translationally, dopamine- and cyclic AMP-regulated neuronal phosphoprotein. Phosphorylation of Thr-34 is required for activity.

It localises to the cytoplasm. Inhibitor of protein-phosphatase 1. This is Protein phosphatase 1 regulatory subunit 1B (PPP1R1B) from Bos taurus (Bovine).